Reading from the N-terminus, the 75-residue chain is Bacteriocin lactococcin-A (75 aa).

The propeptide occupies 1–21 (MKNQLNFNIVSDEELSEANGG). Residues 30 to 52 (AAGDLYYNTNTHKYVYQQTQNAF) form a helical membrane-spanning segment.

It localises to the secreted. The protein localises to the host cell membrane. Kills Lactococci. This Lactococcus lactis subsp. cremoris (Streptococcus cremoris) protein is Bacteriocin lactococcin-A (lcnA).